Reading from the N-terminus, the 361-residue chain is MKPSIHSLTHQTMQEWVLEQGEKKFRADQIWEWLYRKRVQSFEEMTNLSKDLIAKLNDQFVVNPLKQGIVQESADGTVKYLFELPDGMLIETVLMCQHYGLSVCVTTQVGCNIGCTFCASGLIKKQRDLNNGEIVAQIMLVQKYFDERGQDERISHIVVMGIGEPFDNYNNVLNFFRTINDDKGMAIGARHITVSISGLAHKIRDFADEGVQVNLAVSLHAPNNELRSSIMKINRAFPIEKLFAAIEYYIETTNRRVTFEYIMLNEVNDGVEQALELAELLKNIKKSSYVNLIPYNPVSEHDQYSRSPKERVLAFYDTLKKKGGNCVVRQEHGTDIDAACGQLLFNTMKRDRQKAVAAVNP.

The Proton acceptor role is filled by E91. In terms of domain architecture, Radical SAM core spans 97–329; sequence QHYGLSVCVT…KKKGGNCVVR (233 aa). A disulfide bridge connects residues C104 and C340. Residues C111, C115, and C118 each contribute to the [4Fe-4S] cluster site. Residues 163–164, S195, 218–220, and N296 each bind S-adenosyl-L-methionine; these read GE and SLH. The active-site S-methylcysteine intermediate is the C340.

This sequence belongs to the radical SAM superfamily. RlmN family. [4Fe-4S] cluster serves as cofactor.

The protein localises to the cytoplasm. It catalyses the reaction adenosine(2503) in 23S rRNA + 2 reduced [2Fe-2S]-[ferredoxin] + 2 S-adenosyl-L-methionine = 2-methyladenosine(2503) in 23S rRNA + 5'-deoxyadenosine + L-methionine + 2 oxidized [2Fe-2S]-[ferredoxin] + S-adenosyl-L-homocysteine. The enzyme catalyses adenosine(37) in tRNA + 2 reduced [2Fe-2S]-[ferredoxin] + 2 S-adenosyl-L-methionine = 2-methyladenosine(37) in tRNA + 5'-deoxyadenosine + L-methionine + 2 oxidized [2Fe-2S]-[ferredoxin] + S-adenosyl-L-homocysteine. Specifically methylates position 2 of adenine 2503 in 23S rRNA and position 2 of adenine 37 in tRNAs. The polypeptide is Probable dual-specificity RNA methyltransferase RlmN (Streptococcus pneumoniae (strain P1031)).